Consider the following 549-residue polypeptide: ATP synthase subunit alpha (549 aa).

An ATP-binding site is contributed by 172–179; sequence GDRKTGKT. The disordered stretch occupies residues 513–549; that stretch reads SSTGESVVPDEHVEAMDEEDLGKESVKVKKPAPQKKK. Residues 540-549 show a composition bias toward basic residues; the sequence is VKKPAPQKKK.

The protein belongs to the ATPase alpha/beta chains family. In terms of assembly, F-type ATPases have 2 components, CF(1) - the catalytic core - and CF(0) - the membrane proton channel. CF(1) has five subunits: alpha(3), beta(3), gamma(1), delta(1), epsilon(1). CF(0) has three main subunits: a(1), b(2) and c(9-12). The alpha and beta chains form an alternating ring which encloses part of the gamma chain. CF(1) is attached to CF(0) by a central stalk formed by the gamma and epsilon chains, while a peripheral stalk is formed by the delta and b chains.

The protein localises to the cell membrane. The catalysed reaction is ATP + H2O + 4 H(+)(in) = ADP + phosphate + 5 H(+)(out). Produces ATP from ADP in the presence of a proton gradient across the membrane. The alpha chain is a regulatory subunit. The sequence is that of ATP synthase subunit alpha from Mycobacterium ulcerans (strain Agy99).